The primary structure comprises 151 residues: Cytochrome c-type biogenesis protein CcmE (151 aa).

At 1–8 the chain is on the cytoplasmic side; sequence MNPQRKKR. The chain crosses the membrane as a helical; Signal-anchor for type II membrane protein span at residues 9-29; the sequence is LLLIVGLLVGVGVAVGFALSA. Topologically, residues 30–151 are periplasmic; it reads LQQNINLFYT…QAAAGGETKP (122 aa). Heme-binding residues include histidine 124 and tyrosine 128.

This sequence belongs to the CcmE/CycJ family.

The protein resides in the cell inner membrane. Its function is as follows. Heme chaperone required for the biogenesis of c-type cytochromes. Transiently binds heme delivered by CcmC and transfers the heme to apo-cytochromes in a process facilitated by CcmF and CcmH. The chain is Cytochrome c-type biogenesis protein CcmE from Pseudomonas putida (strain ATCC 700007 / DSM 6899 / JCM 31910 / BCRC 17059 / LMG 24140 / F1).